The primary structure comprises 534 residues: Pentatricopeptide repeat-containing protein At5g50990 (534 aa).

6 PPR repeats span residues N128–F158, N164–L198, N199–N229, D230–P264, D265–R295, and K301–E331. Residues I336–G408 are type E motif. The tract at residues G409 to K439 is type E(+) motif. Residues S440–W534 form a type DYW motif region.

It belongs to the PPR family. PCMP-H subfamily.

This Arabidopsis thaliana (Mouse-ear cress) protein is Pentatricopeptide repeat-containing protein At5g50990 (PCMP-H59).